An 89-amino-acid polypeptide reads, in one-letter code: Small ribosomal subunit protein uS19 (89 aa).

This sequence belongs to the universal ribosomal protein uS19 family.

Its function is as follows. Protein S19 forms a complex with S13 that binds strongly to the 16S ribosomal RNA. This is Small ribosomal subunit protein uS19 from Rhodopirellula baltica (strain DSM 10527 / NCIMB 13988 / SH1).